Here is a 722-residue protein sequence, read N- to C-terminus: Cellulose synthase-like protein G2 (722 aa).

The next 2 helical transmembrane spans lie at 25-45 and 51-71; these read IYAV…VHSI and TLIT…WATT. Catalysis depends on residues D139 and D437. 6 consecutive transmembrane segments (helical) span residues 514–534, 548–568, 583–605, 635–655, 660–680, and 702–722; these read FWPF…VALI, FWLY…DFLL, WMVR…TLNL, PSSS…LAFM, GIFT…FAVV, and ICFL…FFLK.

This sequence belongs to the glycosyltransferase 2 family. Plant cellulose synthase-like G subfamily. Expressed in young seedlings, primarily in the vascular tissue.

It is found in the golgi apparatus membrane. In terms of biological role, thought to be a Golgi-localized beta-glycan synthase that polymerize the backbones of noncellulosic polysaccharides (hemicelluloses) of plant cell wall. This is Cellulose synthase-like protein G2 (CSLG2) from Arabidopsis thaliana (Mouse-ear cress).